The following is a 385-amino-acid chain: G2/mitotic-specific cyclin-B3 (385 aa).

Positions 1–16 are enriched in polar residues; sequence MMLRSQAKNVDLTSQA. Disordered regions lie at residues 1-48 and 63-88; these read MMLR…HSKG and SAKR…QKSR. 2 stretches are compositionally biased toward basic and acidic residues: residues 17-28 and 63-80; these read DSRHQQKRKQAE and SAKR…RDVE.

It belongs to the cyclin family. Cyclin AB subfamily.

Its subcellular location is the nucleus. In terms of biological role, could be involved at the G2/M (mitosis) transition. Interacts with the CDK1 and CDK2 protein kinases. G2/M cyclins accumulate steadily during G2 and are abruptly destroyed at mitosis. Plays a role during oocyte meiosis II. This is G2/mitotic-specific cyclin-B3 (cyb-3) from Caenorhabditis elegans.